The sequence spans 410 residues: Pyrophosphate--fructose 6-phosphate 1-phosphotransferase (410 aa).

Diphosphate is bound at residue glycine 12. Residue aspartate 121 participates in Mg(2+) binding. Residues 149–151, 194–196, glutamate 266, and 323–326 each bind substrate; these read TID, MGR, and YFSR. The active-site Proton acceptor is aspartate 151.

This sequence belongs to the phosphofructokinase type A (PFKA) family. PPi-dependent PFK group II subfamily. Clade 'P' sub-subfamily. Homodimer or homotetramer. Requires Mg(2+) as cofactor.

It is found in the cytoplasm. It catalyses the reaction beta-D-fructose 6-phosphate + diphosphate = beta-D-fructose 1,6-bisphosphate + phosphate + H(+). It participates in carbohydrate degradation; glycolysis; D-glyceraldehyde 3-phosphate and glycerone phosphate from D-glucose: step 3/4. With respect to regulation, non-allosteric. Its function is as follows. Catalyzes the phosphorylation of D-fructose 6-phosphate, the first committing step of glycolysis. Uses inorganic phosphate (PPi) as phosphoryl donor instead of ATP like common ATP-dependent phosphofructokinases (ATP-PFKs), which renders the reaction reversible, and can thus function both in glycolysis and gluconeogenesis. Consistently, PPi-PFK can replace the enzymes of both the forward (ATP-PFK) and reverse (fructose-bisphosphatase (FBPase)) reactions. The sequence is that of Pyrophosphate--fructose 6-phosphate 1-phosphotransferase from Mastigamoeba balamuthi (Phreatamoeba balamuthi).